Consider the following 151-residue polypeptide: Lectin-like protein BA14k (151 aa).

The signal sequence occupies residues 1-26 (MNIFKQTCVGAFAVIFGATSIAPTMA). Residues 83–103 (GWWYPLAAFGAGAIIGGAVSQ) traverse the membrane as a helical segment.

The protein belongs to the BA14k family.

It is found in the cell membrane. Has immunoglobulin-binding and hemagglutination properties, and can bind to mannose. Essential for virulence. May be involved in LPS biosynthesis or polysaccharide transport. In Brucella anthropi (strain ATCC 49188 / DSM 6882 / CCUG 24695 / JCM 21032 / LMG 3331 / NBRC 15819 / NCTC 12168 / Alc 37) (Ochrobactrum anthropi), this protein is Lectin-like protein BA14k.